Here is a 611-residue protein sequence, read N- to C-terminus: MIEVLLVTICFTVFPYQGSSIILESGNVNDYEVVYPQKVPALPKGGVQNPQPETKYEDTMQYEFHVNGEPVVLHLERNKGLFSEDYTETHYAPDGREITTSPPVQDHCYYHGYIQNEADSSAAISACDGLKGHFKHRGETYFIEPLKLSNSESHAIYKDEHVEKEDEIPKICGVTQTTSESDEPIEKISQLTNTPEQDRYLQVKKYIELYVVVDNRMYRNYNSNRDAINERVYEMVNTLNVMYRPLNFFIALIGLEIWSNQDEINIEPEVAVTLRSFGEWRNTTLLPRKRNDNAQLLTGIDFNGATVGLAYVGTLCRPTQSVAVIQDHSKRTSMVASTMAHELGHNLGINHDSASCNCNAGPCIMSATISNQPLSEFSSCSVQEHQRYLLRVRPQCILNKPLSTDIVTPPVCGNYFVERGEECDCGSPQDCQDACCNAATCKLQHDCDSGECCEQCKFKKAGAECRAAKDDCDLPESCTGQSAECPTDSFQRNGHPCQNNQGYCYNGKCPIMTNQCIALKGPGVNVSPDECFTLKQNDPECGFCRIENGTKIPCAEKDKMCGKLLCQEGNATCICFPTTDDPDYGMVEPGTKCGDGKVCINRQCVDVQTAY.

The signal sequence occupies residues 1-20 (MIEVLLVTICFTVFPYQGSS). The propeptide occupies 21 to 191 (IILESGNVND…DEPIEKISQL (171 aa)). In terms of domain architecture, Peptidase M12B spans 205–401 (KYIELYVVVD…VRPQCILNKP (197 aa)). Glu-208 is a binding site for Ca(2+). N-linked (GlcNAc...) asparagine glycosylation occurs at Asn-282. Residue Asp-292 coordinates Ca(2+). 3 cysteine pairs are disulfide-bonded: Cys-316/Cys-396, Cys-356/Cys-380, and Cys-358/Cys-363. Positions 341, 345, and 351 each coordinate Zn(2+). Residues Cys-396, Asn-399, Asn-414, Phe-416, Glu-418, Glu-421, and Asp-424 each coordinate Ca(2+). A Disintegrin domain is found at 409-493 (PPVCGNYFVE…ECPTDSFQRN (85 aa)). 15 disulfides stabilise this stretch: Cys-412-Cys-441, Cys-423-Cys-436, Cys-425-Cys-431, Cys-435-Cys-456, Cys-447-Cys-453, Cys-452-Cys-478, Cys-465-Cys-485, Cys-472-Cys-504, Cys-497-Cys-509, Cys-516-Cys-566, Cys-531-Cys-573, Cys-541-Cys-575, Cys-544-Cys-554, Cys-561-Cys-599, and Cys-593-Cys-604. The D/ECD-tripeptide motif lies at 471–473 (DCD). The Ca(2+) site is built by Asp-473, Leu-474, Glu-476, and Asp-488. Residues Asn-548 and Asn-570 are each glycosylated (N-linked (GlcNAc...) asparagine).

The protein belongs to the venom metalloproteinase (M12B) family. P-III subfamily. As to quaternary structure, monomer. It depends on Zn(2+) as a cofactor. In terms of tissue distribution, expressed by the venom gland.

The protein resides in the secreted. Snake venom zinc metalloproteinase that may impair hemostasis in the prey. This is Zinc metalloproteinase-disintegrin-like MTP9 from Drysdalia coronoides (White-lipped snake).